The following is a 244-amino-acid chain: Transforming protein v-Fos/v-Fox (244 aa).

A transforming protein v-Fos region spans residues 1-236 (DSLSYYHSPA…LFPASSGHSG (236 aa)). The region spanning 113–176 (EVKRRIRRER…EKLEFILAAH (64 aa)) is the bZIP domain. The interval 115 to 135 (KRRIRRERNKMAAAKCRNRRR) is basic motif. Residues 141–169 (LQAETDQLEDEKSALQTEIANLLKEKEKL) are leucine-zipper. The segment at 237–244 (FISMAGWQ) is transforming protein v-Fox.

The protein belongs to the bZIP family. Fos subfamily.

The protein resides in the host nucleus. The chain is Transforming protein v-Fos/v-Fox (FOS-FOX) from Mus musculus (Mouse).